Reading from the N-terminus, the 266-residue chain is MKLSLSPPPYADAPVVVLISGLGGSGSYWLQQLAVLEQEYQVVCYDQRGTGNNPDTLAEDYSIAQMAAELHQALVAAGIEHYAVVGHALGALVGMQLALDYPASVTVLISVNGWLRINAHTRRCFQVRERLLYSGGAQAWVEAQPLFLYPADWMAARAPRLEAEDALALAHFQGKNNLLRRLNALKRADFSHHADRIRCPVQIICASDDLLVPTACSSELHAALPDSQKMVMPYGGHACNVTDPETFNALLLNGLASLLHHREAAL.

The protein belongs to the AB hydrolase superfamily. Hydrolase RutD family.

The catalysed reaction is carbamate + 2 H(+) = NH4(+) + CO2. Involved in pyrimidine catabolism. May facilitate the hydrolysis of carbamate, a reaction that can also occur spontaneously. The chain is Putative carbamate hydrolase RutD from Escherichia coli O103:H2 (strain 12009 / EHEC).